Reading from the N-terminus, the 485-residue chain is Iroquois-class homeodomain protein IRX-4 (485 aa).

A DNA-binding region (homeobox; TALE-type) is located at residues 142 to 203 (GTRRKNATRE…NARRRLKKEN (62 aa)). The segment at 206 to 313 (TWPPRNKCSD…EEEEAAERAR (108 aa)) is disordered. Residues 221–232 (EEEEEEEEECSQ) show a composition bias toward acidic residues. Basic and acidic residues predominate over residues 234–253 (DAMKSEKAEEPTGKEEKELE). Positions 254–269 (LSDLEDLDAAESESSE) are enriched in acidic residues. Positions 282–294 (HPLPGGGPPPRAA) are enriched in pro residues.

This sequence belongs to the TALE/IRO homeobox family. In terms of tissue distribution, ventricles of the heart, developing feather buds, retina, hindbrain.

It localises to the nucleus. In terms of biological role, regulates the chamber-specific expression of myosin isoforms by activating the expression of the ventricle myosin heavy chain-1 (Vmhc1) and suppressing the expression of the atrial myosin heavy chain-1 (Amhc1) in the ventricles. May play a critical role in establishing chamber-specific gene expression in the developing heart. This chain is Iroquois-class homeodomain protein IRX-4 (IRX4), found in Gallus gallus (Chicken).